We begin with the raw amino-acid sequence, 76 residues long: Translational regulator CsrA (76 aa).

The protein belongs to the CsrA/RsmA family. As to quaternary structure, homodimer; the beta-strands of each monomer intercalate to form a hydrophobic core, while the alpha-helices form wings that extend away from the core.

The protein localises to the cytoplasm. In terms of biological role, a translational regulator that binds mRNA to regulate translation initiation and/or mRNA stability. Usually binds in the 5'-UTR at or near the Shine-Dalgarno sequence preventing ribosome-binding, thus repressing translation. Its main target seems to be the major flagellin gene, while its function is anatagonized by FliW. The chain is Translational regulator CsrA from Helicobacter pylori (strain J99 / ATCC 700824) (Campylobacter pylori J99).